A 458-amino-acid chain; its full sequence is UDP-N-acetylglucosamine 1-carboxyvinyltransferase (458 aa).

A phosphoenolpyruvate-binding site is contributed by 34-35; that stretch reads KN. A UDP-N-acetyl-alpha-D-glucosamine-binding site is contributed by Arg104. The Proton donor role is filled by Cys128. Cys128 is modified (2-(S-cysteinyl)pyruvic acid O-phosphothioketal). Residues Asp320 and Val342 each contribute to the UDP-N-acetyl-alpha-D-glucosamine site.

Belongs to the EPSP synthase family. MurA subfamily.

Its subcellular location is the cytoplasm. It catalyses the reaction phosphoenolpyruvate + UDP-N-acetyl-alpha-D-glucosamine = UDP-N-acetyl-3-O-(1-carboxyvinyl)-alpha-D-glucosamine + phosphate. It participates in cell wall biogenesis; peptidoglycan biosynthesis. In terms of biological role, cell wall formation. Adds enolpyruvyl to UDP-N-acetylglucosamine. This Prochlorococcus marinus (strain NATL2A) protein is UDP-N-acetylglucosamine 1-carboxyvinyltransferase.